The primary structure comprises 274 residues: NAD kinase (274 aa).

Aspartate 59 (proton acceptor) is an active-site residue. NAD(+) contacts are provided by residues 59–60 (DG), lysine 64, 128–129 (ND), aspartate 158, 169–174 (TAYALS), and alanine 193.

The protein belongs to the NAD kinase family. A divalent metal cation serves as cofactor.

The protein localises to the cytoplasm. The enzyme catalyses NAD(+) + ATP = ADP + NADP(+) + H(+). In terms of biological role, involved in the regulation of the intracellular balance of NAD and NADP, and is a key enzyme in the biosynthesis of NADP. Catalyzes specifically the phosphorylation on 2'-hydroxyl of the adenosine moiety of NAD to yield NADP. This Petrotoga mobilis (strain DSM 10674 / SJ95) protein is NAD kinase.